A 246-amino-acid chain; its full sequence is 2-C-methyl-D-erythritol 4-phosphate cytidylyltransferase (246 aa).

It belongs to the IspD/TarI cytidylyltransferase family. IspD subfamily.

It carries out the reaction 2-C-methyl-D-erythritol 4-phosphate + CTP + H(+) = 4-CDP-2-C-methyl-D-erythritol + diphosphate. It participates in isoprenoid biosynthesis; isopentenyl diphosphate biosynthesis via DXP pathway; isopentenyl diphosphate from 1-deoxy-D-xylulose 5-phosphate: step 2/6. Its function is as follows. Catalyzes the formation of 4-diphosphocytidyl-2-C-methyl-D-erythritol from CTP and 2-C-methyl-D-erythritol 4-phosphate (MEP). The polypeptide is 2-C-methyl-D-erythritol 4-phosphate cytidylyltransferase (Chlorobaculum parvum (strain DSM 263 / NCIMB 8327) (Chlorobium vibrioforme subsp. thiosulfatophilum)).